The primary structure comprises 154 residues: TSET complex member tstD (154 aa).

It belongs to the adaptor complexes small subunit family. As to quaternary structure, component of the TSET complex, a heterohexamer composed of tstA, tstB, tstC, tstD, tstE and tstF, which may act in plasma membrane turnover. tstA, tstB, tstC and tstD are likely to be the core complex members with tstE and tstF acting as associated scaffold proteins.

Its subcellular location is the cell membrane. It localises to the cytoplasm. The chain is TSET complex member tstD from Dictyostelium discoideum (Social amoeba).